A 141-amino-acid chain; its full sequence is Galactose-6-phosphate isomerase subunit LacA (141 aa).

The protein belongs to the LacAB/RpiB family. As to quaternary structure, heteromultimeric protein consisting of LacA and LacB.

The catalysed reaction is aldehydo-D-galactose 6-phosphate = keto-D-tagatose 6-phosphate. The protein operates within carbohydrate metabolism; D-galactose 6-phosphate degradation; D-tagatose 6-phosphate from D-galactose 6-phosphate: step 1/1. The chain is Galactose-6-phosphate isomerase subunit LacA from Streptococcus pneumoniae (strain Taiwan19F-14).